A 319-amino-acid polypeptide reads, in one-letter code: uncharacterized protein (319 aa).

Residues 36–178 (IIEFLLSFKG…MTVIHEERGF (143 aa)) form the SIS domain. Residue 51–56 (GIGKSG) participates in ATP binding. CBS domains are found at residues 203-263 (MRSG…HLKT) and 268-319 (MTKN…MGVS).

It belongs to the SIS family. GutQ/KpsF subfamily.

This is an uncharacterized protein from Rickettsia prowazekii (strain Madrid E).